Consider the following 90-residue polypeptide: MEESGIVGFTVTGAVEKVTDFRTAPFCSQAVFAQMLGLEDITEDVVRGWVETKTIPTAKIGRRRVVNLHRIRRDLDRGKSIFCQGDYDGD.

The polypeptide is 10.1 kDa protein (Pseudomonas aeruginosa (Bacteriophage Pf1)).